We begin with the raw amino-acid sequence, 79 residues long: Putative defensin-like protein 203 (79 aa).

A signal peptide spans 1–27 (MAKLIVNFSALLMIILLVSNGLPKAVA). 4 disulfides stabilise this stretch: Cys-30-Cys-79, Cys-40-Cys-64, Cys-49-Cys-73, and Cys-53-Cys-75.

It belongs to the DEFL family.

The protein localises to the secreted. The chain is Putative defensin-like protein 203 from Arabidopsis thaliana (Mouse-ear cress).